Consider the following 214-residue polypeptide: uncharacterized protein (214 aa).

The stretch at 39–68 forms a coiled coil; the sequence is KLRSKKEVEEKIKEVDRELEEVVNAGVSIN. A compositionally biased stretch (basic and acidic residues) spans 99-114; it reads EIKVEAPEPDEEKLPD. The disordered stretch occupies residues 99–162; that stretch reads EIKVEAPEPD…EEVEFDEEDD (64 aa). Residues 123 to 162 show a composition bias toward acidic residues; the sequence is SDLDMDFEDLGQEIPLDADEQEEEEEEEEVEEVEFDEEDD. The stretch at 138–212 forms a coiled coil; that stretch reads LDADEQEEEE…IQRLKVLSGG (75 aa).

This is an uncharacterized protein from Archaeoglobus fulgidus (strain ATCC 49558 / DSM 4304 / JCM 9628 / NBRC 100126 / VC-16).